The following is a 63-amino-acid chain: Large ribosomal subunit protein bL32 (63 aa).

Basic residues predominate over residues 1-16; sequence MAVPKRKTSRMKRGFR. Residues 1–22 form a disordered region; sequence MAVPKRKTSRMKRGFRRSADAI.

This sequence belongs to the bacterial ribosomal protein bL32 family.

The chain is Large ribosomal subunit protein bL32 from Beijerinckia indica subsp. indica (strain ATCC 9039 / DSM 1715 / NCIMB 8712).